Reading from the N-terminus, the 393-residue chain is Formate-dependent phosphoribosylglycinamide formyltransferase (393 aa).

Residues 22–23 and glutamate 82 each bind N(1)-(5-phospho-beta-D-ribosyl)glycinamide; that span reads EL. Residues arginine 114, lysine 155, 160-165, 195-198, and glutamate 203 each bind ATP; these read SSGKGQ and EGFI. One can recognise an ATP-grasp domain in the interval 119 to 308; that stretch reads RLAAEELDLP…QFALHARAIL (190 aa). Mg(2+)-binding residues include glutamate 267 and glutamate 279. N(1)-(5-phospho-beta-D-ribosyl)glycinamide is bound by residues aspartate 286, lysine 356, and 363-364; that span reads RR.

The protein belongs to the PurK/PurT family. As to quaternary structure, homodimer.

It carries out the reaction N(1)-(5-phospho-beta-D-ribosyl)glycinamide + formate + ATP = N(2)-formyl-N(1)-(5-phospho-beta-D-ribosyl)glycinamide + ADP + phosphate + H(+). It functions in the pathway purine metabolism; IMP biosynthesis via de novo pathway; N(2)-formyl-N(1)-(5-phospho-D-ribosyl)glycinamide from N(1)-(5-phospho-D-ribosyl)glycinamide (formate route): step 1/1. Functionally, involved in the de novo purine biosynthesis. Catalyzes the transfer of formate to 5-phospho-ribosyl-glycinamide (GAR), producing 5-phospho-ribosyl-N-formylglycinamide (FGAR). Formate is provided by PurU via hydrolysis of 10-formyl-tetrahydrofolate. In Pseudomonas fluorescens (strain Pf0-1), this protein is Formate-dependent phosphoribosylglycinamide formyltransferase.